The primary structure comprises 402 residues: Deoxyguanosinetriphosphate triphosphohydrolase-like protein 2 (402 aa).

Residues 72–215 (RLTHSLEVAQ…MDLADEIAYA (144 aa)) enclose the HD domain.

It belongs to the dGTPase family. Type 2 subfamily.

The protein is Deoxyguanosinetriphosphate triphosphohydrolase-like protein 2 of Vibrio cholerae serotype O1 (strain ATCC 39315 / El Tor Inaba N16961).